The following is a 163-amino-acid chain: MADSSFDIVSKVDRQEVDNALNQAAKELATRFDFRGTDTTIAWKGDEAIELTSSTEERVKAAVDVFKEKLIRRDISMKAFDAGEPQASGKTYKVNGTLKQGISSENAKKITKLIRDEGPKGVKTQIQGDEIRVSSKKRDDLQAVIAMLKQADLDVALQFVNYR.

Belongs to the YajQ family.

Its function is as follows. Nucleotide-binding protein. This chain is Nucleotide-binding protein MAV_4575, found in Mycobacterium avium (strain 104).